The chain runs to 157 residues: S-ribosylhomocysteine lyase (157 aa).

Fe cation contacts are provided by His54, His58, and Cys124.

The protein belongs to the LuxS family. In terms of assembly, homodimer. Fe cation serves as cofactor.

The enzyme catalyses S-(5-deoxy-D-ribos-5-yl)-L-homocysteine = (S)-4,5-dihydroxypentane-2,3-dione + L-homocysteine. Its function is as follows. Involved in the synthesis of autoinducer 2 (AI-2) which is secreted by bacteria and is used to communicate both the cell density and the metabolic potential of the environment. The regulation of gene expression in response to changes in cell density is called quorum sensing. Catalyzes the transformation of S-ribosylhomocysteine (RHC) to homocysteine (HC) and 4,5-dihydroxy-2,3-pentadione (DPD). The polypeptide is S-ribosylhomocysteine lyase (Lactobacillus helveticus (strain DPC 4571)).